A 606-amino-acid polypeptide reads, in one-letter code: Phosphomethylpyrimidine synthase (606 aa).

Residues 84–103 (EPYPARSVKPEDNGLTSSPI) are disordered. Substrate contacts are provided by residues Asn-209, Met-238, Tyr-267, His-303, 323 to 325 (SRG), 364 to 367 (DGLR), and Glu-403. Residue His-407 participates in Zn(2+) binding. Substrate is bound at residue Tyr-430. Residue His-471 participates in Zn(2+) binding. Positions 551, 554, and 559 each coordinate [4Fe-4S] cluster.

Belongs to the ThiC family. Homodimer. [4Fe-4S] cluster is required as a cofactor.

The catalysed reaction is 5-amino-1-(5-phospho-beta-D-ribosyl)imidazole + S-adenosyl-L-methionine = 4-amino-2-methyl-5-(phosphooxymethyl)pyrimidine + CO + 5'-deoxyadenosine + formate + L-methionine + 3 H(+). Its pathway is cofactor biosynthesis; thiamine diphosphate biosynthesis. Catalyzes the synthesis of the hydroxymethylpyrimidine phosphate (HMP-P) moiety of thiamine from aminoimidazole ribotide (AIR) in a radical S-adenosyl-L-methionine (SAM)-dependent reaction. The polypeptide is Phosphomethylpyrimidine synthase (Bartonella tribocorum (strain CIP 105476 / IBS 506)).